A 138-amino-acid chain; its full sequence is Large ribosomal subunit protein uL16 (138 aa).

It belongs to the universal ribosomal protein uL16 family. As to quaternary structure, part of the 50S ribosomal subunit.

In terms of biological role, binds 23S rRNA and is also seen to make contacts with the A and possibly P site tRNAs. The chain is Large ribosomal subunit protein uL16 from Hyphomonas neptunium (strain ATCC 15444).